A 422-amino-acid polypeptide reads, in one-letter code: UDP-N-acetylglucosamine 1-carboxyvinyltransferase (422 aa).

22-23 contributes to the phosphoenolpyruvate binding site; the sequence is KN. Arg-93 is a UDP-N-acetyl-alpha-D-glucosamine binding site. Cys-117 serves as the catalytic Proton donor. Cys-117 is subject to 2-(S-cysteinyl)pyruvic acid O-phosphothioketal. Residues 122–126, Asp-308, and Leu-330 each bind UDP-N-acetyl-alpha-D-glucosamine; that span reads RPVDL.

This sequence belongs to the EPSP synthase family. MurA subfamily.

Its subcellular location is the cytoplasm. The catalysed reaction is phosphoenolpyruvate + UDP-N-acetyl-alpha-D-glucosamine = UDP-N-acetyl-3-O-(1-carboxyvinyl)-alpha-D-glucosamine + phosphate. Its pathway is cell wall biogenesis; peptidoglycan biosynthesis. Cell wall formation. Adds enolpyruvyl to UDP-N-acetylglucosamine. The chain is UDP-N-acetylglucosamine 1-carboxyvinyltransferase from Helicobacter pylori (strain ATCC 700392 / 26695) (Campylobacter pylori).